We begin with the raw amino-acid sequence, 240 residues long: Putative cytochrome c-type biogenesis protein DbsD-like (240 aa).

Helical transmembrane passes span 32–52, 74–94, 104–124, 149–169, 176–196, and 218–238; these read FVFF…ILPI, FFFC…ATLL, GIPV…LNIV, VGIG…LLIW, LFIG…PIII, and APFS…SSIL.

It belongs to the DsbD family.

It localises to the plastid. It is found in the chloroplast membrane. Functionally, could be involved in cytochrome c synthesis. In Porphyra purpurea (Red seaweed), this protein is Putative cytochrome c-type biogenesis protein DbsD-like.